The following is a 235-amino-acid chain: 2,3,4,5-tetrahydropyridine-2,6-dicarboxylate N-acetyltransferase (235 aa).

The protein belongs to the transferase hexapeptide repeat family. DapH subfamily.

It catalyses the reaction (S)-2,3,4,5-tetrahydrodipicolinate + acetyl-CoA + H2O = L-2-acetamido-6-oxoheptanedioate + CoA. Its pathway is amino-acid biosynthesis; L-lysine biosynthesis via DAP pathway; LL-2,6-diaminopimelate from (S)-tetrahydrodipicolinate (acetylase route): step 1/3. Its function is as follows. Catalyzes the transfer of an acetyl group from acetyl-CoA to tetrahydrodipicolinate. The chain is 2,3,4,5-tetrahydropyridine-2,6-dicarboxylate N-acetyltransferase from Exiguobacterium sp. (strain ATCC BAA-1283 / AT1b).